The following is an 88-amino-acid chain: Small ribosomal subunit protein uS15 (88 aa).

This sequence belongs to the universal ribosomal protein uS15 family. As to quaternary structure, part of the 30S ribosomal subunit. Forms a bridge to the 50S subunit in the 70S ribosome, contacting the 23S rRNA.

In terms of biological role, one of the primary rRNA binding proteins, it binds directly to 16S rRNA where it helps nucleate assembly of the platform of the 30S subunit by binding and bridging several RNA helices of the 16S rRNA. Its function is as follows. Forms an intersubunit bridge (bridge B4) with the 23S rRNA of the 50S subunit in the ribosome. This chain is Small ribosomal subunit protein uS15, found in Mycoplasma mycoides subsp. mycoides SC (strain CCUG 32753 / NCTC 10114 / PG1).